Here is a 429-residue protein sequence, read N- to C-terminus: Histidine--tRNA ligase (429 aa).

This sequence belongs to the class-II aminoacyl-tRNA synthetase family. In terms of assembly, homodimer.

It is found in the cytoplasm. It carries out the reaction tRNA(His) + L-histidine + ATP = L-histidyl-tRNA(His) + AMP + diphosphate + H(+). This chain is Histidine--tRNA ligase, found in Streptococcus pneumoniae (strain CGSP14).